The sequence spans 416 residues: Iron/alpha-ketoglutarate-dependent dioxygenase asqJ (416 aa).

The interval 1–53 is disordered; that stretch reads MGYPKAFTSSDSEPEPDLSRDLGNPVMGNPGVVSRSSSTVAQHSVRNNPTGPD. Polar residues predominate over residues 34 to 50; that stretch reads SRSSSTVAQHSVRNNPT. Residues histidine 242, aspartate 244, and histidine 319 each coordinate Fe cation.

It belongs to the PhyH family. As to quaternary structure, homodimer. The cofactor is Fe cation.

The enzyme catalyses (-)-4'-methoxycyclopeptine + 2-oxoglutarate + O2 = (Z)-4'-methoxydehydrocyclopeptine + succinate + CO2 + H2O. It carries out the reaction (Z)-4'-methoxydehydrocyclopeptine + 2-oxoglutarate + O2 = (-)-4'-methoxycyclopenine + succinate + CO2. It catalyses the reaction (-)-cyclopeptine + 2-oxoglutarate + O2 = (Z)-dehydrocyclopeptine + succinate + CO2 + H2O. The catalysed reaction is (Z)-dehydrocyclopeptine + 2-oxoglutarate + O2 = (-)-cyclopenine + succinate + CO2. Its pathway is secondary metabolite biosynthesis. It functions in the pathway alkaloid biosynthesis. It participates in mycotoxin biosynthesis. Functionally, iron/alpha-ketoglutarate-dependent dioxygenase; part of the gene cluster that mediates the biosynthesis of the aspoquinolone mycotoxins. Within the pathway, the iron/alpha-ketoglutarate-dependent dioxygenase asqJ acts as a (-)-cyclopenine synthase that converts 4'-methoxycyclopeptin into 4'-methoxydehydrocyclopeptin through dehydrogenation to form a double bond between C-alpha and C-beta of the O-methyltyrosine side chain. AsqJ is a very unique dioxygenase which is capable of catalyzing radical-mediated dehydrogenation and epoxidation reactions sequentially on a 6,7-benzo-diazepinedione substrate in the 4'-methoxyviridicatin biosynthetic pathway. AsqJ is also capable of converting cyclopeptin into dehydrocyclopeptin. The first step of the pathway is catalyzed by the nonribosomal peptide synthetase asqK that condenses anthranilic acid and O-methyl-L-tyrosine to produce 4'-methoxycyclopeptin. 4'-methoxycyclopeptin is then converted to 4'-methoxydehydrocyclopeptin by the ketoglutarate-dependent dioxygenase asqJ. AsqJ also converts its first product 4'-methoxydehydrocyclopeptin to 4'-methoxycyclopenin. The following conversion of 4'-methoxycyclopenin into 4'-methoxyviridicatin is catalyzed by the cyclopenase asqI. 4'-methoxyviridicatin is the precursor of quinolone natural products, and is further converted to quinolinone B. The prenyltransferase asqH1 then catalyzes the canonical Friedel-Crafts alkylation of quinolinone B with dimethylallyl cation to yield dimethylallyl quinolone, which is subjected to FAD-dependent dehydrogenation by the FAD-linked oxidoreductase asqF to yield conjugated aryl diene. The delta(3') double bond then serves as the site of the second alkylation with DMAPP catalyzed by the prenyltransferase asqH2 to yield a carbenium ion intermediate, which can be attacked by H(2)O to yield a styrenyl quinolone containing a C3'-hydroxyprenyl chain. The FAD-dependent monooxygenase asqG performs epoxidation of the terminal C7'-C8' olefin. Finally, after dehydratation of the epoxide at C3 by asqC, the quinolone epoxide rearrangement protein asqO catalyzes an enzymatic 3-exo-tet cyclization to yield the cyclopropyl-THF ring system in aspoquinolone. This is Iron/alpha-ketoglutarate-dependent dioxygenase asqJ from Emericella nidulans (strain FGSC A4 / ATCC 38163 / CBS 112.46 / NRRL 194 / M139) (Aspergillus nidulans).